The chain runs to 496 residues: Guanosine-5'-triphosphate,3'-diphosphate pyrophosphatase (496 aa).

Belongs to the GppA/Ppx family. GppA subfamily.

The enzyme catalyses guanosine 3'-diphosphate 5'-triphosphate + H2O = guanosine 3',5'-bis(diphosphate) + phosphate + H(+). It functions in the pathway purine metabolism; ppGpp biosynthesis; ppGpp from GTP: step 2/2. Functionally, catalyzes the conversion of pppGpp to ppGpp. Guanosine pentaphosphate (pppGpp) is a cytoplasmic signaling molecule which together with ppGpp controls the 'stringent response', an adaptive process that allows bacteria to respond to amino acid starvation, resulting in the coordinated regulation of numerous cellular activities. The sequence is that of Guanosine-5'-triphosphate,3'-diphosphate pyrophosphatase from Aeromonas salmonicida (strain A449).